A 1091-amino-acid polypeptide reads, in one-letter code: MDKSKQMNINNLSNIPEVIDPGITIPIYEEEYENNGESNSQLQQQPQKLGSYRSRAGKFSNTLSNLLPSISAKLHHSKKNSHGKNGAEFSSSNNSSQSTVASKTPRASPSRSKMMESSIDGVTMDRPGSLTPPQDMEKLVHFPDSSNNFLIPAPRGSSDSFNLPHQISRTRNNTMSSQITSISSIAPKPRTSSGIWSSNASANDPMQQHLLQQLQPTTSNNTTNSNTLNDYSTKTAYFDNMVSTSGSQMADNKMNTNNLAIPNSVWSNTRQRSQSNASSIYTDAPLYEQPARASISSHYTIPTQESPLIADEIDPQSINWVTMDPTVPSINQISNLLPTNTISISNVFPLQHQQPQLNNAINLTSTSLATLCSKYGEVISARTLRNLNMALVEFSSVESAVKALDSLQGKEVSMIGAPSKISFAKILPMHQQPPQFLLNSQGLPLGLENNNLQPQPLLQEQLFNGAVTFQQQGNVSIPVFNQQSQQSQHQNHSSGSAGFSNVLHGYNNNNSMHGNNNNSANEKEQCPFPLPPPNVNEKEDLLREIIELFEANSDEYQINSLIKKSLNHKGTSDTQNFGPLPEPLSGREFDPPKLRELRKSIDSNAFSDLEIEQLAIAMLDELPELSSDYLGNTIVQKLFEHSSDIIKDIMLRKTSKYLTSMGVHKNGTWACQKMITMAHTPRQIMQVTQGVKDYCTPLINDQFGNYVIQCVLKFGFPWNQFIFESIIANFWVIVQNRYGARAVRACLEAHDIVTPEQSIVLSAMIVTYAEYLSTNSNGALLVTWFLDTSVLPNRHSILAPRLTKRIVELCGHRLASLTILKVLNYRGDDNARKIILDSLFGNVNAHDSSPPKELTKLLCETNYGPTFVHKVLAMPLLEDDLRAHIIKQVRKVLTDSTQIQPSRRLLEEVGLASPSSTHNKTKQQQQQHHNSSISHMFATPDTSGQHMRGLSVSSVKSGGSKHTTMNTTTTNGSSASTLSPGQPLNANSNSSMGYFSYPGVFPVSGFSGNASNGYAMNNDDLSSQFDMLNFNNGTRLSLPQLSLTNHNNTTMELVNNVGSSQPHTNNNNNNNNTNYNDDNTVFETLTLHSAN.

2 disordered regions span residues 31 to 51 (EYEN…KLGS) and 75 to 131 (HHSK…GSLT). A compositionally biased stretch (polar residues) spans 99–111 (TVASKTPRASPSR). Position 129 is a phosphoserine (Ser-129). Thr-131 carries the phosphothreonine modification. Phosphoserine occurs at positions 160 and 168. Residues 340–426 (NTISISNVFP…APSKISFAKI (87 aa)) form the RRM domain. 2 stretches are compositionally biased toward low complexity: residues 482-494 (QQSQ…NHSS) and 507-520 (NNNN…NNSA). Disordered stretches follow at residues 482-534 (QQSQ…PPPN) and 568-591 (HKGT…EFDP). The region spanning 557-913 (QINSLIKKSL…RLLEEVGLAS (357 aa)) is the PUM-HD domain. Positions 568–577 (HKGTSDTQNF) are enriched in polar residues. Pumilio repeat units lie at residues 617–652 (AMLD…IMLR), 653–689 (KTSK…QVTQ), 690–724 (GVKD…FIFE), 725–760 (SIIA…QSIV), and 801–837 (RLTK…IILD). The disordered stretch occupies residues 911 to 981 (LASPSSTHNK…GSSASTLSPG (71 aa)). At Ser-913 the chain carries Phosphoserine. 2 stretches are compositionally biased toward low complexity: residues 915 to 935 (SSTH…SISH) and 951 to 979 (SVSS…STLS).

This Saccharomyces cerevisiae (strain ATCC 204508 / S288c) (Baker's yeast) protein is Protein JSN1 (JSN1).